We begin with the raw amino-acid sequence, 142 residues long: Ribosome-binding factor A (142 aa).

A disordered region spans residues 120–142 (TLGEVQSESDQPTTYETTTVNKT). Over residues 123 to 142 (EVQSESDQPTTYETTTVNKT) the composition is skewed to polar residues.

It belongs to the RbfA family. As to quaternary structure, monomer. Binds 30S ribosomal subunits, but not 50S ribosomal subunits or 70S ribosomes.

The protein resides in the cytoplasm. One of several proteins that assist in the late maturation steps of the functional core of the 30S ribosomal subunit. Associates with free 30S ribosomal subunits (but not with 30S subunits that are part of 70S ribosomes or polysomes). Required for efficient processing of 16S rRNA. May interact with the 5'-terminal helix region of 16S rRNA. In Prochlorococcus marinus (strain MIT 9313), this protein is Ribosome-binding factor A.